The sequence spans 125 residues: Large ribosomal subunit protein bL12 (125 aa).

This sequence belongs to the bacterial ribosomal protein bL12 family. Homodimer. Part of the ribosomal stalk of the 50S ribosomal subunit. Forms a multimeric L10(L12)X complex, where L10 forms an elongated spine to which 2 to 4 L12 dimers bind in a sequential fashion. Binds GTP-bound translation factors.

Forms part of the ribosomal stalk which helps the ribosome interact with GTP-bound translation factors. Is thus essential for accurate translation. This Syntrophomonas wolfei subsp. wolfei (strain DSM 2245B / Goettingen) protein is Large ribosomal subunit protein bL12.